A 106-amino-acid chain; its full sequence is Large ribosomal subunit protein P1 (106 aa).

Residues 69–106 are disordered; sequence AAAAAPAEEAKEEAKEEEEEEEEVKEEEAIEGLGALFG. The span at 83–98 shows a compositional bias: acidic residues; the sequence is KEEEEEEEEVKEEEAI.

The protein belongs to the eukaryotic ribosomal protein P1/P2 family. Part of the 50S ribosomal subunit. Homodimer, it forms part of the ribosomal stalk which helps the ribosome interact with GTP-bound translation factors. Forms a heptameric uL10/P0(P1)2(P1)2(P1)2 complex, where uL10/P0 forms an elongated spine to which the P1 dimers bind in a sequential fashion.

Forms part of the ribosomal stalk, playing a central role in the interaction of the ribosome with GTP-bound translation factors. This Archaeoglobus fulgidus (strain ATCC 49558 / DSM 4304 / JCM 9628 / NBRC 100126 / VC-16) protein is Large ribosomal subunit protein P1.